The following is a 377-amino-acid chain: NIF3-like protein 1 (377 aa).

The residue at position 109 (Lys109) is an N6-acetyllysine. Residues 244–377 (LLLHTGMGRL…ETDRDPLQVV (134 aa)) are mediates interaction with COPS2. The residue at position 255 (Thr255) is a Phosphothreonine. Ser259 carries the post-translational modification Phosphoserine.

Belongs to the GTP cyclohydrolase I type 2/NIF3 family. In terms of assembly, homodimer. Interacts with COPS2. Interacts with THOC7.

The protein resides in the cytoplasm. The protein localises to the nucleus. May function as a transcriptional corepressor through its interaction with COPS2, negatively regulating the expression of genes involved in neuronal differentiation. The protein is NIF3-like protein 1 of Homo sapiens (Human).